We begin with the raw amino-acid sequence, 223 residues long: Uracil phosphoribosyltransferase (223 aa).

5-phospho-alpha-D-ribose 1-diphosphate contacts are provided by residues R86, R111, and 145-153 (DPILATGST). Uracil-binding positions include I209 and 214–216 (GDA). D215 contacts 5-phospho-alpha-D-ribose 1-diphosphate.

Belongs to the UPRTase family. Mg(2+) is required as a cofactor.

It carries out the reaction UMP + diphosphate = 5-phospho-alpha-D-ribose 1-diphosphate + uracil. It participates in pyrimidine metabolism; UMP biosynthesis via salvage pathway; UMP from uracil: step 1/1. With respect to regulation, allosterically activated by GTP. Catalyzes the conversion of uracil and 5-phospho-alpha-D-ribose 1-diphosphate (PRPP) to UMP and diphosphate. The sequence is that of Uracil phosphoribosyltransferase from Natronomonas pharaonis (strain ATCC 35678 / DSM 2160 / CIP 103997 / JCM 8858 / NBRC 14720 / NCIMB 2260 / Gabara) (Halobacterium pharaonis).